Here is a 245-residue protein sequence, read N- to C-terminus: uncharacterized protein (245 aa).

This is an uncharacterized protein from Rhodobacter capsulatus (Rhodopseudomonas capsulata).